The chain runs to 274 residues: Large ribosomal subunit protein uL2 (274 aa).

Disordered stretches follow at residues Leu-34 to Ile-54 and Val-224 to Ala-261.

This sequence belongs to the universal ribosomal protein uL2 family. As to quaternary structure, part of the 50S ribosomal subunit. Forms a bridge to the 30S subunit in the 70S ribosome.

Functionally, one of the primary rRNA binding proteins. Required for association of the 30S and 50S subunits to form the 70S ribosome, for tRNA binding and peptide bond formation. It has been suggested to have peptidyltransferase activity; this is somewhat controversial. Makes several contacts with the 16S rRNA in the 70S ribosome. This is Large ribosomal subunit protein uL2 from Ectopseudomonas mendocina (strain ymp) (Pseudomonas mendocina).